Here is a 395-residue protein sequence, read N- to C-terminus: Gastric triacylglycerol lipase (395 aa).

The N-terminal stretch at 1 to 18 (MWLLLVTSVLSAFGGAHG) is a signal peptide. N33 carries N-linked (GlcNAc...) asparagine glycosylation. The 296-residue stretch at 81–376 (LQHGLIASAT…LPYNHLDFIW (296 aa)) folds into the AB hydrolase-1 domain. The active-site Nucleophile is S171. C245 and C254 are oxidised to a cystine. N-linked (GlcNAc...) asparagine glycosylation is present at N270. Catalysis depends on charge relay system residues D342 and H371.

This sequence belongs to the AB hydrolase superfamily. Lipase family.

It localises to the secreted. It catalyses the reaction a triacylglycerol + H2O = a diacylglycerol + a fatty acid + H(+). The enzyme catalyses 1,2,3-tri-(9Z-octadecenoyl)-glycerol + H2O = 1,2-di-(9Z-octadecenoyl)-sn-glycerol + (9Z)-octadecenoate + H(+). The catalysed reaction is 1,2,3-trioctanoylglycerol + H2O = 1,2-dioctanoyl-sn-glycerol + octanoate + H(+). Its function is as follows. Catalyzes the hydrolysis of triacylglycerols to yield free fatty acids, diacylglycerol, monoacylglycerol, and glycerol. Shows a preferential hydrolysis at the sn-3 position of triacylglycerol. This chain is Gastric triacylglycerol lipase (Lipf), found in Mus musculus (Mouse).